Here is a 477-residue protein sequence, read N- to C-terminus: UDP-N-acetylmuramate--L-alanine ligase (477 aa).

118–124 serves as a coordination point for ATP; sequence GTHGKTS.

It belongs to the MurCDEF family.

Its subcellular location is the cytoplasm. It catalyses the reaction UDP-N-acetyl-alpha-D-muramate + L-alanine + ATP = UDP-N-acetyl-alpha-D-muramoyl-L-alanine + ADP + phosphate + H(+). Its pathway is cell wall biogenesis; peptidoglycan biosynthesis. In terms of biological role, cell wall formation. The sequence is that of UDP-N-acetylmuramate--L-alanine ligase from Corynebacterium diphtheriae (strain ATCC 700971 / NCTC 13129 / Biotype gravis).